Reading from the N-terminus, the 209-residue chain is MAGIKVFGHPASTATRRVLIALHEKNLDFEFVHIELKDGEHKKEPFIFRNPFGKVPAFEDGDFKLFESRAITQYIAHFYSDKGNQLVSLGSKDIAGIAMGIEIESHEFDPVGSKLVWEQVLKPLYGMTTDKTVVEEEEAKLAKVLDVYEHRLGESKYLASDKFTLVDLHTIPVIQYLLGTPTKKLFDERPHVSAWVADITSRPSAKKVL.

One can recognise a GST N-terminal domain in the interval 2–83 (AGIKVFGHPA…YIAHFYSDKG (82 aa)). Glutathione-binding positions include 12–13 (ST), 41–42 (HK), 54–55 (KV), and 67–68 (ES). In terms of domain architecture, GST C-terminal spans 90–209 (GSKDIAGIAM…TSRPSAKKVL (120 aa)).

It belongs to the GST superfamily. Phi family.

The protein localises to the cytoplasm. Its subcellular location is the cytosol. It carries out the reaction RX + glutathione = an S-substituted glutathione + a halide anion + H(+). In terms of biological role, may be involved in the conjugation of reduced glutathione to a wide number of exogenous and endogenous hydrophobic electrophiles and have a detoxification role against certain herbicides. The chain is Glutathione S-transferase F7 from Arabidopsis thaliana (Mouse-ear cress).